The sequence spans 310 residues: Methionyl-tRNA formyltransferase (310 aa).

109–112 (SLLP) provides a ligand contact to (6S)-5,6,7,8-tetrahydrofolate.

Belongs to the Fmt family.

The catalysed reaction is L-methionyl-tRNA(fMet) + (6R)-10-formyltetrahydrofolate = N-formyl-L-methionyl-tRNA(fMet) + (6S)-5,6,7,8-tetrahydrofolate + H(+). Functionally, attaches a formyl group to the free amino group of methionyl-tRNA(fMet). The formyl group appears to play a dual role in the initiator identity of N-formylmethionyl-tRNA by promoting its recognition by IF2 and preventing the misappropriation of this tRNA by the elongation apparatus. This Pseudomonas paraeruginosa (strain DSM 24068 / PA7) (Pseudomonas aeruginosa (strain PA7)) protein is Methionyl-tRNA formyltransferase.